We begin with the raw amino-acid sequence, 491 residues long: Glutamyl-tRNA(Gln) amidotransferase subunit A (491 aa).

Catalysis depends on charge relay system residues lysine 76 and serine 154. Serine 178 functions as the Acyl-ester intermediate in the catalytic mechanism.

The protein belongs to the amidase family. GatA subfamily. In terms of assembly, heterotrimer of A, B and C subunits.

The catalysed reaction is L-glutamyl-tRNA(Gln) + L-glutamine + ATP + H2O = L-glutaminyl-tRNA(Gln) + L-glutamate + ADP + phosphate + H(+). Functionally, allows the formation of correctly charged Gln-tRNA(Gln) through the transamidation of misacylated Glu-tRNA(Gln) in organisms which lack glutaminyl-tRNA synthetase. The reaction takes place in the presence of glutamine and ATP through an activated gamma-phospho-Glu-tRNA(Gln). The polypeptide is Glutamyl-tRNA(Gln) amidotransferase subunit A (Cereibacter sphaeroides (strain KD131 / KCTC 12085) (Rhodobacter sphaeroides)).